We begin with the raw amino-acid sequence, 551 residues long: Solute carrier family 22 member 3 (551 aa).

Residues 21–41 (VFLLLCLTGVTFAFLFVGVVF) traverse the membrane as a helical segment. Residues Asn-72, Asn-99, and Asn-114 are each glycosylated (N-linked (GlcNAc...) asparagine). A helical membrane pass occupies residues 177-197 (LIIYLISCFGVGITGVVVAFA). Asn-199 carries N-linked (GlcNAc...) asparagine glycosylation. The next 2 helical transmembrane spans lie at 236–256 (IVGI…PGIA) and 264–284 (GIQL…WVVP). Residues 284–288 (PESPR) carry the Proline-rich sequence motif. Asn-317 is a glycosylation site (N-linked (GlcNAc...) asparagine). The next 3 helical transmembrane spans lie at 376–396 (IDFF…LLTI), 464–484 (GVSL…FLLF), and 493–513 (LPLI…MLLP).

It belongs to the major facilitator (TC 2.A.1) superfamily. Organic cation transporter (TC 2.A.1.19) family. Highly expressed in placenta. Highly expressed in kidney cortex. In kidney, expressed specifically in the proximal and distal convoluted tubules and within Bowman capsule. Expressed in brain, particularly in dopaminergic neurons of the substantia nigra compacta, non-aminergic neurons of the ventral tegmental area, substantia nigra reticulata, locus coeruleus, hippocampus and cortex. In brain, also detected in astrocytes in the substantia nigra reticulata, several hypothalamic nuclei and nigrostriatal region. Expressed in neurons and glial cells of amygdala.

It localises to the cell membrane. It is found in the apical cell membrane. Its subcellular location is the basolateral cell membrane. The protein localises to the mitochondrion membrane. The protein resides in the endomembrane system. It localises to the nucleus membrane. It is found in the nucleus outer membrane. It carries out the reaction (R)-noradrenaline(out) = (R)-noradrenaline(in). The enzyme catalyses (R)-adrenaline(out) = (R)-adrenaline(in). It catalyses the reaction serotonin(out) = serotonin(in). The catalysed reaction is dopamine(out) = dopamine(in). It carries out the reaction histamine(out) = histamine(in). The enzyme catalyses tyramine(in) = tyramine(out). It catalyses the reaction guanidine(out) = guanidine(in). The catalysed reaction is agmatine(out) = agmatine(in). It carries out the reaction spermidine(in) = spermidine(out). The enzyme catalyses L-histidyl-L-proline diketopiperazine(in) = L-histidyl-L-proline diketopiperazine(out). It catalyses the reaction (R)-salsolinol(in) = (R)-salsolinol(out). Its function is as follows. Electrogenic voltage-dependent transporter that mediates the transport of a variety of organic cations such as endogenous bioactive amines, cationic drugs and xenobiotics. Cation cellular uptake or release is driven by the electrochemical potential, i.e. membrane potential and concentration gradient. Functions as a Na(+)- and Cl(-)-independent, bidirectional uniporter. Implicated in monoamine neurotransmitters uptake such as dopamine, adrenaline/epinephrine, noradrenaline/norepinephrine, homovanillic acid, histamine, serotonin and tyramine, thereby supporting a role in homeostatic regulation of aminergic neurotransmission in the brain. Transports dopaminergic neuromodulators cyclo(his-pro) and salsolinol with low efficiency. May be involved in the uptake and disposition of cationic compounds by renal clearance from the blood flow. May contribute to regulate the transport of cationic compounds in testis across the blood-testis-barrier. Mediates the transport of polyamine spermidine and putrescine. Mediates the bidirectional transport of polyamine agmatine. Also transports guanidine. May also mediate intracellular transport of organic cations, thereby playing a role in amine metabolism and intracellular signaling. This Mus musculus (Mouse) protein is Solute carrier family 22 member 3.